Consider the following 346-residue polypeptide: UPF0425 pyridoxal phosphate-dependent protein MK0620 (346 aa).

At Lys-206 the chain carries N6-(pyridoxal phosphate)lysine.

Pyridoxal 5'-phosphate is required as a cofactor.

This Methanopyrus kandleri (strain AV19 / DSM 6324 / JCM 9639 / NBRC 100938) protein is UPF0425 pyridoxal phosphate-dependent protein MK0620.